The sequence spans 313 residues: Cadmium, cobalt and zinc/H(+)-K(+) antiporter (313 aa).

Over 1 to 14 (MGHNHNHAGGSNKK) the chain is Extracellular. The helical transmembrane segment at 15 to 35 (VLLISFIMITGYMIIEAIGGF) threads the bilayer. At 36-45 (LTNSLALLSD) the chain is on the cytoplasmic side. A helical transmembrane segment spans residues 46 to 66 (AGHMLSDSISLMVALIAFKLA). Residues 67–80 (EKKASHHKTFGYKR) lie on the Extracellular side of the membrane. Residues 81-101 (FEILAAVINGVALILISLYII) form a helical membrane-spanning segment. Over 102–117 (YEAIKRFSHPPEVATT) the chain is Cytoplasmic. A helical transmembrane segment spans residues 118–138 (GMLTISIIGLAVNILVAWIML). Residues 139–159 (NGGDTKNNLNIRGAYLHVISD) lie on the Extracellular side of the membrane. Residues 160 to 180 (MLGSIGAILAAILIIFFGWSW) traverse the membrane as a helical segment. The Cytoplasmic portion of the chain corresponds to 181-313 (ADPAASVIVA…TENPRDHHHH (133 aa)).

Belongs to the cation diffusion facilitator (CDF) transporter (TC 2.A.4) family. SLC30A subfamily.

The protein localises to the cell membrane. Its function is as follows. Involved in divalent cation and potassium homeostasis in the cell. Catalyzes the active efflux of zinc, cadmium and cobalt, in exchange for potassium and H(+) ions. The sequence is that of Cadmium, cobalt and zinc/H(+)-K(+) antiporter (czcD) from Bacillus velezensis (strain DSM 23117 / BGSC 10A6 / LMG 26770 / FZB42) (Bacillus amyloliquefaciens subsp. plantarum).